The chain runs to 599 residues: MSLFHLYTRVLQLLGKEARLGWILAVANLLLATAQFAEPILFGRIVDVMSGNLATGALVPETRSPWPLLGAWVGFGLFTIMCSALVALQADRLAHRRRQAVLTSYFEHILQLPISFHTGTHSGRLMKVMLQGTDALWRMWLGFFREHFAAILSLVVLLPLSLYINWRLAILLFVLCIVFTVLTTLVVHKTYGMQGEVEAQYSDLSARASDALGNVALVQSFVRVDAEVQGLRNVSGRLLEAQMPVLSWWALVTVITRASTTITVLSIFALGIYLNQQGLTSVGEIVMFVSFATLLIQRLEQVVNFINNVLMEAPRLREFIAVLDTVPAVRDRADAIDCGRLSGLVEFQNVSFSYDGKRPAIEDLSFTALPGDTIALVGATGAGKSTAIALLHRAFDPQSGVIKVDGMDIRGITLASLRRNIGVVFQEALLFDRSIADNLRVGKPDATPEELRLAAERAQALEFIERSDHKFDTNAGERGRMLSGGERQRLSIARALLKDPPILILDEATSALDAVTEAKLNLALDEVMKGRTTFVIAHRLSTIRDATRILVFDNGKVIESGTFDELVARGGAFAQLARAQFMVQESARSAMSSAADAQL.

In terms of domain architecture, ABC transmembrane type-1 spans 21–311 (GWILAVANLL…VVNFINNVLM (291 aa)). 6 helical membrane passes run 22-42 (WILA…PILF), 68-88 (LLGA…LVAL), 146-166 (EHFA…YINW), 168-188 (LAIL…LVVH), 254-274 (VITR…GIYL), and 276-296 (QQGL…TLLI). The ABC transporter domain occupies 345–579 (VEFQNVSFSY…GGAFAQLARA (235 aa)). 378–385 (GATGAGKS) contacts ATP.

It belongs to the ABC transporter superfamily. Beta-(1--&gt;2)glucan exporter (TC 3.A.1.108.1) family. In terms of assembly, homodimer.

The protein resides in the cell inner membrane. The enzyme catalyses [(1-&gt;2)-beta-D-glucosyl](n)(in) + ATP + H2O = [(1-&gt;2)-beta-D-glucosyl](n)(out) + ADP + phosphate + H(+). Its function is as follows. Involved in beta-(1--&gt;2)glucan export. Transmembrane domains (TMD) form a pore in the inner membrane and the ATP-binding domain (NBD) is responsible for energy generation. The chain is Beta-(1--&gt;2)glucan export ATP-binding/permease protein NdvA from Rhodopseudomonas palustris (strain ATCC BAA-98 / CGA009).